The primary structure comprises 152 residues: UPF0178 protein SAS0646 (152 aa).

It belongs to the UPF0178 family.

This is UPF0178 protein SAS0646 from Staphylococcus aureus (strain MSSA476).